Here is a 174-residue protein sequence, read N- to C-terminus: Urease accessory protein UreE (174 aa).

It belongs to the UreE family.

It localises to the cytoplasm. In terms of biological role, involved in urease metallocenter assembly. Binds nickel. Probably functions as a nickel donor during metallocenter assembly. In Helicobacter hepaticus (strain ATCC 51449 / 3B1), this protein is Urease accessory protein UreE.